The chain runs to 388 residues: Protein-glutamate methylesterase/protein-glutamine glutaminase 1 (388 aa).

Residues 4–121 (QVLVVDDSSF…ATNKDEAIRL (118 aa)) enclose the Response regulatory domain. Aspartate 55 bears the 4-aspartylphosphate mark. The segment at 149 to 190 (SARAGLSSTSPTLGSSTLGRSPASGLASSASRNSPTVSTPAS) is disordered. Over residues 153-169 (GLSSTSPTLGSSTLGRS) the composition is skewed to low complexity. Over residues 174–189 (LASSASRNSPTVSTPA) the composition is skewed to polar residues. The CheB-type methylesterase domain occupies 188-388 (PASAIRASGK…EAILKESGRG (201 aa)). Residues serine 207, histidine 234, and aspartate 330 contribute to the active site.

The protein belongs to the CheB family. Phosphorylated by CheA. Phosphorylation of the N-terminal regulatory domain activates the methylesterase activity.

The protein resides in the cytoplasm. It carries out the reaction [protein]-L-glutamate 5-O-methyl ester + H2O = L-glutamyl-[protein] + methanol + H(+). It catalyses the reaction L-glutaminyl-[protein] + H2O = L-glutamyl-[protein] + NH4(+). Its function is as follows. Involved in chemotaxis. Part of a chemotaxis signal transduction system that modulates chemotaxis in response to various stimuli. Catalyzes the demethylation of specific methylglutamate residues introduced into the chemoreceptors (methyl-accepting chemotaxis proteins or MCP) by CheR. Also mediates the irreversible deamidation of specific glutamine residues to glutamic acid. The polypeptide is Protein-glutamate methylesterase/protein-glutamine glutaminase 1 (Shewanella denitrificans (strain OS217 / ATCC BAA-1090 / DSM 15013)).